The following is a 156-amino-acid chain: SsrA-binding protein (156 aa).

This sequence belongs to the SmpB family.

It is found in the cytoplasm. Functionally, required for rescue of stalled ribosomes mediated by trans-translation. Binds to transfer-messenger RNA (tmRNA), required for stable association of tmRNA with ribosomes. tmRNA and SmpB together mimic tRNA shape, replacing the anticodon stem-loop with SmpB. tmRNA is encoded by the ssrA gene; the 2 termini fold to resemble tRNA(Ala) and it encodes a 'tag peptide', a short internal open reading frame. During trans-translation Ala-aminoacylated tmRNA acts like a tRNA, entering the A-site of stalled ribosomes, displacing the stalled mRNA. The ribosome then switches to translate the ORF on the tmRNA; the nascent peptide is terminated with the 'tag peptide' encoded by the tmRNA and targeted for degradation. The ribosome is freed to recommence translation, which seems to be the essential function of trans-translation. The sequence is that of SsrA-binding protein from Paracoccus denitrificans (strain Pd 1222).